A 326-amino-acid chain; its full sequence is Aspartate carbamoyltransferase catalytic subunit (326 aa).

2 residues coordinate carbamoyl phosphate: R58 and T59. An L-aspartate-binding site is contributed by K86. Carbamoyl phosphate is bound by residues R108, H141, and Q144. Residues R181 and R239 each contribute to the L-aspartate site. Carbamoyl phosphate-binding residues include G280 and P281.

It belongs to the aspartate/ornithine carbamoyltransferase superfamily. ATCase family. In terms of assembly, heterododecamer (2C3:3R2) of six catalytic PyrB chains organized as two trimers (C3), and six regulatory PyrI chains organized as three dimers (R2).

The enzyme catalyses carbamoyl phosphate + L-aspartate = N-carbamoyl-L-aspartate + phosphate + H(+). The protein operates within pyrimidine metabolism; UMP biosynthesis via de novo pathway; (S)-dihydroorotate from bicarbonate: step 2/3. Functionally, catalyzes the condensation of carbamoyl phosphate and aspartate to form carbamoyl aspartate and inorganic phosphate, the committed step in the de novo pyrimidine nucleotide biosynthesis pathway. This Synechococcus sp. (strain JA-3-3Ab) (Cyanobacteria bacterium Yellowstone A-Prime) protein is Aspartate carbamoyltransferase catalytic subunit.